A 73-amino-acid chain; its full sequence is Adipokinetic prohormone type 2 (73 aa).

The first 20 residues, 1 to 20, serve as a signal peptide directing secretion; it reads MCRIFIVLLVVAALAIIIEG. Gln21 carries the post-translational modification Pyrrolidone carboxylic acid. Asparagine amide is present on Asn30. A propeptide spanning residues 34–73 is cleaved from the precursor; the sequence is SISSEQINDDCNPEEAIFQIYKLIVSEGERIRACQRDGKM.

In terms of tissue distribution, expressed in corpora cardiaca (CC), corpora allata (CA) and gnathal ganglion (GNG) (at protein level). Expression in CC and CA detected in all animals, expression in GNG detected in few animals (at protein level). Not expressed in antennal lobe (AL) (at protein level).

The protein localises to the secreted. This hormone, released from cells in the corpora cardiaca, causes release of diglycerides from the fat body and stimulation of muscles to use these diglycerides as an energy source during energy-demanding processes. In Agrotis ipsilon (Black cutworm moth), this protein is Adipokinetic prohormone type 2.